Here is a 350-residue protein sequence, read N- to C-terminus: N(4)-bis(aminopropyl)spermidine synthase (350 aa).

This sequence belongs to the branched-chain polyamine synthase family.

The protein resides in the cytoplasm. The enzyme catalyses 2 S-adenosyl 3-(methylsulfanyl)propylamine + spermidine = N(4)-bis(aminopropyl)spermidine + 2 S-methyl-5'-thioadenosine + 2 H(+). It functions in the pathway amine and polyamine biosynthesis. Functionally, involved in the biosynthesis of branched-chain polyamines, which support the growth of thermophiles under high-temperature conditions. Catalyzes the sequential condensation of spermidine with the aminopropyl groups of decarboxylated S-adenosylmethionines to produce N(4)-bis(aminopropyl)spermidine via N(4)-aminopropylspermidine. The chain is N(4)-bis(aminopropyl)spermidine synthase from Methanocaldococcus jannaschii (strain ATCC 43067 / DSM 2661 / JAL-1 / JCM 10045 / NBRC 100440) (Methanococcus jannaschii).